The primary structure comprises 850 residues: Mitochondrial escape protein 2 (850 aa).

A mitochondrion-targeting transit peptide spans 1-44 (MLLVRTTSLNVSRMPVPCLARGIGILKGKYRLANLMNAQPSVRH). The tract at residues 44-66 (HVSSEIQQKDQQAGESNTATDTG) is disordered. The Mitochondrial matrix segment spans residues 45-287 (VSSEIQQKDQ…VSNFFTNHTR (243 aa)). Residues 47–64 (SEIQQKDQQAGESNTATD) are compositionally biased toward polar residues. An RRM domain is found at 198–272 (TTIVIKFQGP…TVLHIQYENI (75 aa)). The helical transmembrane segment at 288-308 (IAIPVLFALLSIFAVLVFDPI) threads the bilayer. Residues 309–850 (REFSIEQKIT…CEEEIKNLSK (542 aa)) lie on the Mitochondrial intermembrane side of the membrane. Over residues 607–621 (KGENVKEPESEKEIA) the composition is skewed to basic and acidic residues. Residues 607 to 633 (KGENVKEPESEKEIAENNDSDSEADTS) form a disordered region.

It belongs to the YME2 family.

It is found in the mitochondrion inner membrane. Plays a role in maintaining the mitochondrial genome and in controlling the mtDNA escape. Involved in the regulation of mtDNA nucleotide structure and number. May have a dispensable role in early maturation of pre-rRNA. This chain is Mitochondrial escape protein 2 (YME2), found in Saccharomyces cerevisiae (strain YJM789) (Baker's yeast).